The primary structure comprises 600 residues: Chaperone protein DnaK (600 aa).

Residue threonine 175 is modified to Phosphothreonine; by autocatalysis. Residues 569–578 show a composition bias toward low complexity; sequence SFAQATAQQA. Residues 569-600 are disordered; the sequence is SFAQATAQQANTSESDPKADDSNTIDAEIKQD. Over residues 583 to 600 the composition is skewed to basic and acidic residues; sequence SDPKADDSNTIDAEIKQD.

This sequence belongs to the heat shock protein 70 family.

Its function is as follows. Acts as a chaperone. This Mesomycoplasma hyopneumoniae (strain J / ATCC 25934 / NCTC 10110) (Mycoplasma hyopneumoniae) protein is Chaperone protein DnaK.